An 893-amino-acid chain; its full sequence is Dolichyl-phosphate-mannose--protein mannosyltransferase 1 (893 aa).

The next 7 helical transmembrane spans lie at 29–49 (FSFLDYVVVIFLTVVAFCVRA), 77–97 (LLMDVYPPLGKLLFSLVAALT), 124–144 (LFTCLLGSLLVPLMYGTVYFP), 147–167 (SKTAASLAALFVIFDNGLITM), 170–190 (YIMIEIPALYFMSLTAFYWSV), 224–244 (AMFTFGWLLILAAFHLWNLLG), and 258–278 (FSYIFYLIGVPITVYLAVFAV). Residues 310–364 (FADVAYGSLVTIRNAIPEHGYLHSSELLYPEGTEQQIISLVDEPNQNALWIIEHE) enclose the MIR 1 domain. N370 carries N-linked (GlcNAc...) asparagine glycosylation. MIR domains follow at residues 374-433 (IELL…IQIL) and 443-499 (NGTV…IESN). N443 carries N-linked (GlcNAc...) asparagine glycosylation. T451 is modified (phosphothreonine). 3 helical membrane-spanning segments follow: residues 573-593 (FVWYSVISLVAFFVIVQIFCL), 610-630 (YNYNIGKFVVAWLLHWAPYIL), and 643-663 (ALYFGIAALGVSWSFLGNAVF). N665 carries N-linked (GlcNAc...) asparagine glycosylation. Residues 671-691 (ALSVIIMALMFLVYRLYSPFT) traverse the membrane as a helical segment. The N-linked (GlcNAc...) asparagine glycan is linked to N720. The tract at residues 785 to 893 (KAEQEAREAA…VAESAQARVE (109 aa)) is disordered. Residues 786 to 806 (AEQEAREAAEKAASEAAERSS) show a composition bias toward basic and acidic residues. Low complexity-rich tracts occupy residues 807 to 823 (SEAAASSSSESVAAASV) and 854 to 864 (MEAAALNNAAE). Residues 868–878 (VVGSSPESVAS) are compositionally biased toward polar residues.

The protein belongs to the glycosyltransferase 39 family.

The protein localises to the endoplasmic reticulum membrane. The protein resides in the nucleus membrane. It catalyses the reaction a di-trans,poly-cis-dolichyl beta-D-mannosyl phosphate + L-seryl-[protein] = 3-O-(alpha-D-mannosyl)-L-seryl-[protein] + a di-trans,poly-cis-dolichyl phosphate + H(+). It carries out the reaction a di-trans,poly-cis-dolichyl beta-D-mannosyl phosphate + L-threonyl-[protein] = 3-O-(alpha-D-mannosyl)-L-threonyl-[protein] + a di-trans,poly-cis-dolichyl phosphate + H(+). It participates in protein modification; protein glycosylation. Its function is as follows. Transfers mannose from Dol-P-mannose to Ser or Thr residues on proteins. Required for normal cell growth and septum formation. Shown to actively O-mannosylate wsc1. The chain is Dolichyl-phosphate-mannose--protein mannosyltransferase 1 (ogm1) from Schizosaccharomyces pombe (strain 972 / ATCC 24843) (Fission yeast).